Reading from the N-terminus, the 44-residue chain is Thaumatin-like protein 5 (44 aa).

Belongs to the thaumatin family.

The sequence is that of Thaumatin-like protein 5 from Glebionis coronaria (Crown daisy).